A 473-amino-acid chain; its full sequence is Serine palmitoyltransferase 1 (473 aa).

The interval 1-66 (MATATEQWVL…KEELIEEWQP (66 aa)) is interaction with SPTLC2. A helical membrane pass occupies residues 16–36 (ALYEAPAYHLILEGILILWII). Tyrosine 164 carries the post-translational modification Phosphotyrosine; by ABL.

Belongs to the class-II pyridoxal-phosphate-dependent aminotransferase family. Component of the serine palmitoyltransferase (SPT) complex, which is also composed of SPTLC2 or SPTLC3 and SPTSSA or SPTSSB. The heterodimer with SPTLC2 or SPTLC3 forms the catalytic core of the enzyme, while SPTSSA or SPTSSB subunits determine substrate specificity. SPT also interacts with ORMDL proteins, especially ORMDL3, which negatively regulate SPT activity in the presence of ceramides. Forms dimers of heterodimers with SPTLC2. Interacts with RTN4. Pyridoxal 5'-phosphate is required as a cofactor. Post-translationally, phosphorylation at Tyr-164 inhibits activity and promotes cell survival.

The protein localises to the endoplasmic reticulum membrane. It carries out the reaction L-serine + hexadecanoyl-CoA + H(+) = 3-oxosphinganine + CO2 + CoA. The catalysed reaction is octadecanoyl-CoA + L-serine + H(+) = 3-oxoeicosasphinganine + CO2 + CoA. The enzyme catalyses tetradecanoyl-CoA + L-serine + H(+) = 3-oxohexadecasphinganine + CO2 + CoA. It catalyses the reaction dodecanoyl-CoA + L-serine + H(+) = 3-oxotetradecasphinganine + CO2 + CoA. It participates in lipid metabolism; sphingolipid metabolism. Its activity is regulated as follows. SPT complex catalytic activity is negatively regulated by ORMDL proteins, including ORMDL3, in the presence of ceramides. This mechanism allows to maintain ceramide levels at sufficient concentrations for the production of complex sphingolipids, but which prevents the accumulation of ceramides to levels that trigger apoptosis. In terms of biological role, component of the serine palmitoyltransferase multisubunit enzyme (SPT) that catalyzes the initial and rate-limiting step in sphingolipid biosynthesis by condensing L-serine and activated acyl-CoA (most commonly palmitoyl-CoA) to form long-chain bases. The SPT complex is also composed of SPTLC2 or SPTLC3 and SPTSSA or SPTSSB. Within this complex, the heterodimer with SPTLC2 or SPTLC3 forms the catalytic core. The composition of the serine palmitoyltransferase (SPT) complex determines the substrate preference. The SPTLC1-SPTLC2-SPTSSA complex shows a strong preference for C16-CoA substrate, while the SPTLC1-SPTLC3-SPTSSA isozyme uses both C14-CoA and C16-CoA as substrates, with a slight preference for C14-CoA. The SPTLC1-SPTLC2-SPTSSB complex shows a strong preference for C18-CoA substrate, while the SPTLC1-SPTLC3-SPTSSB isozyme displays an ability to use a broader range of acyl-CoAs, without apparent preference. Required for adipocyte cell viability and metabolic homeostasis. The sequence is that of Serine palmitoyltransferase 1 (SPTLC1) from Pongo abelii (Sumatran orangutan).